The chain runs to 84 residues: Small ribosomal subunit protein bS16 (84 aa).

The protein belongs to the bacterial ribosomal protein bS16 family.

The protein is Small ribosomal subunit protein bS16 of Koribacter versatilis (strain Ellin345).